We begin with the raw amino-acid sequence, 163 residues long: Regulatory protein RecX (163 aa).

Positions 1-21 (MSDAEDIPTGRKRRPREQTPV) are disordered.

Belongs to the RecX family.

It localises to the cytoplasm. Functionally, modulates RecA activity. This is Regulatory protein RecX from Stenotrophomonas maltophilia (strain K279a).